We begin with the raw amino-acid sequence, 568 residues long: MNIFKQISSLIFSKLNELKQRGVISTSAANFIIEPPSNRVHGDIYTNVAMVLAKHEKKNPIEIAEVLAKEFELFDEVAKVEIAGSGFINMHLKIEVWHGILKQINELKTEFGTLDIGNNQAINVEFVSANPTGPLHIGHARGAVFGDVLANLLKKVGYKVTKEYYINDAGAQIDTLIRSVYLRYKEALGEKISIEKGLYPGEYLKPIGTGLAKKYGAELLEKQDNQVIRDYTLSSILEIIKEDMNLLGVNHDVFTSEYELQKSGKIEESIKILSDKGLVYEGYLEKPKGKESENWTSRKEMLFRSTKFGDDVDRALKKEDGSWTYFASDIAYHFDKISRGFNNMIVELGSDHGGYVKRLKAVVSALSDDQAKIEVKLHNIVNFFENGKPVKMSKRSGNFLTARDVVEEVGRDITRFIMLTRKNDMVLDFDFAKVKEQSKDNPIFYVQYAHARAHSLMRNAPKELPTADPSLLRTGGELFLIKTLAKWPDVVEIAARLCEPHRITFYLLEVAEAFHVLWGYGKSDLNMRFILEDNLNLTAARMFLVQALAHVIASGLSIFNIEPLEEMS.

The short motif at 129-139 is the 'HIGH' region element; the sequence is ANPTGPLHIGH.

It belongs to the class-I aminoacyl-tRNA synthetase family. As to quaternary structure, monomer.

It localises to the cytoplasm. The catalysed reaction is tRNA(Arg) + L-arginine + ATP = L-arginyl-tRNA(Arg) + AMP + diphosphate. In Wolbachia pipientis wMel, this protein is Arginine--tRNA ligase.